The primary structure comprises 412 residues: Histidinol dehydrogenase (412 aa).

NAD(+)-binding residues include Tyr118, Gln176, and Asn199. Residues Thr222, Gln244, and His247 each contribute to the substrate site. Zn(2+) contacts are provided by Gln244 and His247. Active-site proton acceptor residues include Glu311 and His312. Residues His312, Asp345, Glu399, and His404 each contribute to the substrate site. Asp345 provides a ligand contact to Zn(2+). A Zn(2+)-binding site is contributed by His404.

This sequence belongs to the histidinol dehydrogenase family. The cofactor is Zn(2+).

The enzyme catalyses L-histidinol + 2 NAD(+) + H2O = L-histidine + 2 NADH + 3 H(+). It functions in the pathway amino-acid biosynthesis; L-histidine biosynthesis; L-histidine from 5-phospho-alpha-D-ribose 1-diphosphate: step 9/9. Catalyzes the sequential NAD-dependent oxidations of L-histidinol to L-histidinaldehyde and then to L-histidine. This chain is Histidinol dehydrogenase, found in Thermus thermophilus (strain ATCC BAA-163 / DSM 7039 / HB27).